A 150-amino-acid polypeptide reads, in one-letter code: UPF0098 protein CT_736 (150 aa).

The protein belongs to the UPF0098 family.

This chain is UPF0098 protein CT_736, found in Chlamydia trachomatis serovar D (strain ATCC VR-885 / DSM 19411 / UW-3/Cx).